A 309-amino-acid chain; its full sequence is Taste receptor type 2 member 20 (309 aa).

The Extracellular portion of the chain corresponds to 1 to 6 (MMSFLH). A helical transmembrane segment spans residues 7-27 (IVFSILVVVAFILGNFANGFI). Over 28 to 46 (ALINFIAWVKRQKISSADQ) the chain is Cytoplasmic. A helical membrane pass occupies residues 47 to 67 (IIAALAVSRVGLLWVILLHWY). The Extracellular portion of the chain corresponds to 68–79 (STVLNPTSSNLK). A helical transmembrane segment spans residues 80 to 100 (VIIFISNAWAVTNHFSIWLAT). Residues 101–125 (SLSIFYLLKIVNFSRLIFHHLKRKA) lie on the Cytoplasmic side of the membrane. A helical membrane pass occupies residues 126–146 (KSVVLVIVLGSLFFLVCHLVM). The Extracellular portion of the chain corresponds to 147–178 (KNTYINVWTEECEGNVTWKIKLRNAMHLSNLT). Residues 179–199 (VAMLANLIPFTLTLISFLLLI) form a helical membrane-spanning segment. The Cytoplasmic portion of the chain corresponds to 200-229 (YSLCKHLKKMQLHGKGSQDPSTKIHIKALQ). A helical transmembrane segment spans residues 230–250 (TVTSFLILLAIYFLCLITSFW). Residues 251–259 (NSKMRPKEI) are Extracellular-facing. The chain crosses the membrane as a helical span at residues 260–280 (VLMLCQAFGIIYPSFHSFILI). Topologically, residues 281 to 309 (WGNKTLKQTFLSVLWQVTCWAKGQNQSTP) are cytoplasmic.

Belongs to the G-protein coupled receptor T2R family.

Its subcellular location is the membrane. Its function is as follows. Receptor that may play a role in the perception of bitterness and is gustducin-linked. May play a role in sensing the chemical composition of the gastrointestinal content. The activity of this receptor may stimulate alpha gustducin, mediate PLC-beta-2 activation and lead to the gating of TRPM5. The polypeptide is Taste receptor type 2 member 20 (TAS2R20) (Pan paniscus (Pygmy chimpanzee)).